The sequence spans 116 residues: Aspartate 1-decarboxylase (116 aa).

Residue serine 25 is the Schiff-base intermediate with substrate; via pyruvic acid of the active site. A Pyruvic acid (Ser) modification is found at serine 25. Position 57 (threonine 57) interacts with substrate. Residue tyrosine 58 is the Proton donor of the active site. Glycine 73 to alanine 75 provides a ligand contact to substrate.

This sequence belongs to the PanD family. As to quaternary structure, heterooctamer of four alpha and four beta subunits. It depends on pyruvate as a cofactor. Post-translationally, is synthesized initially as an inactive proenzyme, which is activated by self-cleavage at a specific serine bond to produce a beta-subunit with a hydroxyl group at its C-terminus and an alpha-subunit with a pyruvoyl group at its N-terminus.

The protein localises to the cytoplasm. It carries out the reaction L-aspartate + H(+) = beta-alanine + CO2. The protein operates within cofactor biosynthesis; (R)-pantothenate biosynthesis; beta-alanine from L-aspartate: step 1/1. Catalyzes the pyruvoyl-dependent decarboxylation of aspartate to produce beta-alanine. In Leptospira interrogans serogroup Icterohaemorrhagiae serovar copenhageni (strain Fiocruz L1-130), this protein is Aspartate 1-decarboxylase.